We begin with the raw amino-acid sequence, 428 residues long: MTTRAASANLANARMMHNMEEAGHMANLKGRPHTSHASQRNTLGDIGNQVSAITISDVPRKDPIIKKEIVHLSSHQHKILTKSKATTSLKSLAEESHIPKKQEAFTFLEPVAAMPKPTTVPTATVLPQPTVPVPMDISENVPESFSRVLLNVQNIDANDKENPQLVSEYVNDIYDYMRDLEGKYPIRHNYLENQEITGKMRAILIDWLCQVHHRFHLLQETLYLTVAIIDRLLQESPVPRNKLQLVGVTSMLIASKYEEMYAPEVADFVYITDNAYTKKEILEMEQHILKKLNFSFGRPLCLHFLRRDSKAGQVDANKHTLAKYLMELTITEYDMVQYLPSKIAAAALCLSMKLLDSTHWTETLTHYSSYCEKDLVSTMQKLASLVIKAENSKLTAVHTKYSSSKFMKISKLAALKSPLVKELAAASV.

This sequence belongs to the cyclin family. Cyclin AB subfamily. Interacts with the CDC2 protein kinase to form a serine/threonine kinase holoenzyme complex also known as maturation promoting factor (MPF). The cyclin subunit imparts substrate specificity to the complex.

Its function is as follows. Essential for the control of the cell cycle at the G2/M (mitosis) transition. The chain is G2/mitotic-specific cyclin-B from Spisula solidissima (Atlantic surf-clam).